Reading from the N-terminus, the 329-residue chain is MKNILQSTECLEDQQNVSMRPNLLDDFIGQSSVVNNLKIFINAAYTRKEPMDHVLLYGPPGLGKTTLAHIIAKELKVNFRSTAGPLLSKAGDLAAILTNLQAKDILFIDEIHRLNRNIEEILYSAMEDFCLDIIVGEGCGARTLRVDLPPFTLVGATTRIGLLSNPLRDRFGIPIHLEFYSTEELTKVIQRAAKVIKTNISNSGAQEISLRSRGTPRIALRLLRRIRDFMEVTEHNKIITDTFADKALLRLGIDKLGLDRQDIQYLKFIYDSNNPTGIDTISSGLSEDTGNIEETIEPYLIKINFIQRTPRGRVITEKAISHLREQEYI.

Positions 1-180 are large ATPase domain (RuvB-L); that stretch reads MKNILQSTEC…FGIPIHLEFY (180 aa). Residues Arg20, Gly61, Lys64, Thr65, Thr66, 127-129, Arg170, Tyr180, and Arg217 contribute to the ATP site; that span reads EDF. A Mg(2+)-binding site is contributed by Thr65. The interval 181–252 is small ATPAse domain (RuvB-S); sequence STEELTKVIQ…FADKALLRLG (72 aa). Positions 255 to 329 are head domain (RuvB-H); that stretch reads KLGLDRQDIQ…ISHLREQEYI (75 aa). The DNA site is built by Arg308 and Arg313.

This sequence belongs to the RuvB family. In terms of assembly, homohexamer. Forms an RuvA(8)-RuvB(12)-Holliday junction (HJ) complex. HJ DNA is sandwiched between 2 RuvA tetramers; dsDNA enters through RuvA and exits via RuvB. An RuvB hexamer assembles on each DNA strand where it exits the tetramer. Each RuvB hexamer is contacted by two RuvA subunits (via domain III) on 2 adjacent RuvB subunits; this complex drives branch migration. In the full resolvosome a probable DNA-RuvA(4)-RuvB(12)-RuvC(2) complex forms which resolves the HJ.

Its subcellular location is the cytoplasm. The enzyme catalyses ATP + H2O = ADP + phosphate + H(+). Its function is as follows. The RuvA-RuvB-RuvC complex processes Holliday junction (HJ) DNA during genetic recombination and DNA repair, while the RuvA-RuvB complex plays an important role in the rescue of blocked DNA replication forks via replication fork reversal (RFR). RuvA specifically binds to HJ cruciform DNA, conferring on it an open structure. The RuvB hexamer acts as an ATP-dependent pump, pulling dsDNA into and through the RuvAB complex. RuvB forms 2 homohexamers on either side of HJ DNA bound by 1 or 2 RuvA tetramers; 4 subunits per hexamer contact DNA at a time. Coordinated motions by a converter formed by DNA-disengaged RuvB subunits stimulates ATP hydrolysis and nucleotide exchange. Immobilization of the converter enables RuvB to convert the ATP-contained energy into a lever motion, pulling 2 nucleotides of DNA out of the RuvA tetramer per ATP hydrolyzed, thus driving DNA branch migration. The RuvB motors rotate together with the DNA substrate, which together with the progressing nucleotide cycle form the mechanistic basis for DNA recombination by continuous HJ branch migration. Branch migration allows RuvC to scan DNA until it finds its consensus sequence, where it cleaves and resolves cruciform DNA. In Ehrlichia chaffeensis (strain ATCC CRL-10679 / Arkansas), this protein is Holliday junction branch migration complex subunit RuvB.